We begin with the raw amino-acid sequence, 3550 residues long: Zinc finger homeobox protein 4 (3550 aa).

Met-1 bears the N-acetylmethionine mark. 3 disordered regions span residues 1-54, 426-479, and 521-614; these read METC…LKTD, HLSS…AYSN, and TSSS…IECP. The segment covering 9–20 has biased composition (polar residues); that stretch reads ISRQENGQSTSK. 2 stretches are compositionally biased toward basic and acidic residues: residues 39 to 54 and 433 to 451; these read EPDR…LKTD and KMSE…KEST. Acidic residues predominate over residues 467 to 479; sequence EPGDEDEEDAYSN. 2 stretches are compositionally biased toward polar residues: residues 542-553 and 566-576; these read GRSNGNVTNSYS and RDGTTAAPSET. 3 consecutive C2H2-type zinc fingers follow at residues 611–634, 642–665, and 697–721; these read IECP…TMMH, LKCP…KEKH, and FRCE…SDKH. The tract at residues 739–763 is disordered; it reads HSAPTPNTSLSGCGTPSPSKPKQKP. A compositionally biased stretch (polar residues) spans 742–752; sequence PTPNTSLSGCG. C2H2-type zinc fingers lie at residues 765-787, 915-939, 971-993, and 1019-1043; these read RRCE…MTSE, YQCK…TDKH, LKCN…TTNH, and YYCA…SVKH. The tract at residues 1100–1142 is disordered; it reads KAASEEPSEDAGDPLKPPTVAEDDEKEAHKRDNSEGKISTKDP. Over residues 1125–1142 the composition is skewed to basic and acidic residues; that stretch reads KEAHKRDNSEGKISTKDP. Lys-1165 is covalently cross-linked (Glycyl lysine isopeptide (Lys-Gly) (interchain with G-Cter in SUMO2)). 2 consecutive C2H2-type zinc fingers follow at residues 1188–1211 and 1217–1240; these read YQYP…LSQH and ICCP…THLH. A disordered region spans residues 1271–1339; it reads APEKSEQDPP…EWNKTSSKDV (69 aa). Positions 1297 to 1326 are enriched in basic and acidic residues; the sequence is VDDKSMSGLEDSKVGVEIKNEEQKPAKEPV. Lys-1315 is covalently cross-linked (Glycyl lysine isopeptide (Lys-Gly) (interchain with G-Cter in SUMO2)). 2 C2H2-type zinc fingers span residues 1368–1390 and 1396–1419; these read YRCN…SQYH and TMCT…EAGH. The segment at 1467 to 1492 is disordered; sequence EGKASPVESDGSSIPDDLGLEPKRTL. The segment at 1512-1538 adopts a C2H2-type 12 zinc-finger fold; it reads YKCTVCKESFTQKNILLVHYNSVSHLH. Lys-1562 is covalently cross-linked (Glycyl lysine isopeptide (Lys-Gly) (interchain with G-Cter in SUMO2)). The C2H2-type 13 zinc-finger motif lies at 1564–1588; sequence YKCSTCSVAYSQSSTLEIHMRSVLH. The segment at 1779–1873 is disordered; sequence PQLQPQNQQP…CIPPPRIASG (95 aa). Positions 1792-1808 are enriched in low complexity; the sequence is QQQQPQQQPSKLLKQEQ. A Glycyl lysine isopeptide (Lys-Gly) (interchain with G-Cter in SUMO2) cross-link involves residue Lys-1805. Basic and acidic residues predominate over residues 1823 to 1860; sequence PSYKEAEEVTEKQEKPKQEFINDTEGLKDSKDIKKQKS. The segment at 1916-1939 adopts a C2H2-type 14 zinc-finger fold; it reads LECGICGKLFSNVLILKSHQEHVH. Positions 1984 to 2006 are disordered; it reads KIPNTVSAPLQAPPPTPPSAPQQ. Over residues 1994–2003 the composition is skewed to pro residues; it reads QAPPPTPPSA. DNA-binding regions (homeobox) lie at residues 2069 to 2128 and 2166 to 2225; these read FKRP…RQRN and KRSS…RKSY. The C2H2-type 15; degenerate zinc finger occupies 2252–2276; that stretch reads YQCKKCNVVFPRIFDLITHQKKQCY. Residues 2318-2331 show a composition bias toward polar residues; sequence TLVASSGSGTSTPL. Residues 2318-2412 are disordered; sequence TLVASSGSGT…SQTPIPSSPL (95 aa). Residues 2337 to 2355 are compositionally biased toward basic and acidic residues; sequence PEPEKNSPKTEYPGEKTKQ. The segment covering 2356–2376 has biased composition (polar residues); the sequence is SDPSLPQGTKSAPSSVLTSSE. The span at 2383–2392 shows a compositional bias: pro residues; it reads PQPPTQPPKQ. Residues 2401 to 2412 are compositionally biased toward polar residues; sequence SASQTPIPSSPL. The C2H2-type 16 zinc finger occupies 2430 to 2452; sequence YPCDQCTLAFPTLELWKEHQHMH. The span at 2490–2508 shows a compositional bias: polar residues; that stretch reads GSSLTQMPPQTSTAHTTAP. The interval 2490 to 2545 is disordered; sequence GSSLTQMPPQTSTAHTTAPASVAASLKRKLEDKEDNNCSEKEGGNSGEDQHRDKRL. Residues 2517 to 2541 show a composition bias toward basic and acidic residues; sequence RKLEDKEDNNCSEKEGGNSGEDQHR. A DNA-binding region (homeobox 3) is located at residues 2542–2601; that stretch reads DKRLRTTITPEQLEILYEKYLLDSNPTRKMLDHIAREVGLKKRVVQVWFQNTRARERKGQ. The segment at 2612–2635 adopts a C2H2-type 17 zinc-finger fold; it reads KRCPFCRALFKAKSALESHIRSRH. Ser-2645 bears the Phosphoserine mark. Disordered stretches follow at residues 2746–2791 and 2810–2866; these read AISD…ATTP and HFND…PGHK. Polar residues predominate over residues 2781 to 2791; that stretch reads LDSLQKPATTP. Basic and acidic residues predominate over residues 2811–2820; the sequence is FNDKDGDHDQ. The segment covering 2843–2855 has biased composition (low complexity); sequence PSSPNPFGSSNPF. Positions 2865-2924 form a DNA-binding region, homeobox 4; it reads HKRFRTQMSNLQLKVLKACFSDYRTPTMQECEMLGNEIGLPKRVVQVWFQNARAKERKFK. A C2H2-type 18 zinc finger spans residues 2943-2967; the sequence is PECTLCGVKYSARLSIRDHIFSKQH. 2 disordered regions span residues 3051–3156 and 3261–3318; these read PSSL…EEKI and QDSL…VQLD. The segment covering 3058-3068 has biased composition (polar residues); the sequence is PQNSNTLTSPG. Residues 3075 to 3088 show a composition bias toward low complexity; that stretch reads PSSATSSPALSLSS. Over residues 3097–3109 the composition is skewed to pro residues; the sequence is TPPPPPPPPPPPS. The span at 3136–3156 shows a compositional bias: basic and acidic residues; the sequence is IKEEESEAIKPEKHPKKEEKI. Lys-3137 is covalently cross-linked (Glycyl lysine isopeptide (Lys-Gly) (interchain with G-Cter in SUMO2)). A coiled-coil region spans residues 3248–3277; the sequence is ALLQQYQQYQQSLQDSLQKQQKQQQEQQQK. The segment covering 3261-3276 has biased composition (low complexity); the sequence is QDSLQKQQKQQQEQQQ. The span at 3298–3318 shows a compositional bias: basic and acidic residues; sequence SETKEEKSTAPESTKEEVQLD. The C2H2-type 19; degenerate zinc finger occupies 3337 to 3361; it reads FVCRKCQMMFTDEDATVNHQKSFCY. The C2H2-type 20 zinc-finger motif lies at 3381-3405; sequence YQCLACDLALSGNEALSQHLQSSLH. Residues 3424 to 3445 form a disordered region; sequence LPHSVCSPPPNTSSTSPSAASS. Residues 3435-3445 are compositionally biased toward low complexity; the sequence is TSSTSPSAASS.

Belongs to the krueppel C2H2-type zinc-finger protein family. In terms of tissue distribution, expressed in brain, heart, lung, muscle and small intestine. No expression detected in undifferentiated P19 cells, however, expression was seen following retinoic acid treatment to induce neuronal differentiation. Expressed in undifferentiated C2C12 cells, following induction of muscle differentiation in a low-serum medium, expression levels were decreased.

The protein localises to the nucleus. In terms of biological role, may play a role in neural and muscle differentiation. May be involved in transcriptional regulation. The chain is Zinc finger homeobox protein 4 (Zfhx4) from Mus musculus (Mouse).